A 279-amino-acid chain; its full sequence is Pantothenate synthetase (279 aa).

31-38 (MGALHEGH) contributes to the ATP binding site. Residue H38 is the Proton donor of the active site. Q62 is a (R)-pantoate binding site. Q62 is a beta-alanine binding site. Position 148–151 (148–151 (GEKD)) interacts with ATP. Position 154 (Q154) interacts with (R)-pantoate. ATP contacts are provided by residues V177 and 185 to 188 (LSSR).

It belongs to the pantothenate synthetase family. Homodimer.

Its subcellular location is the cytoplasm. It carries out the reaction (R)-pantoate + beta-alanine + ATP = (R)-pantothenate + AMP + diphosphate + H(+). It functions in the pathway cofactor biosynthesis; (R)-pantothenate biosynthesis; (R)-pantothenate from (R)-pantoate and beta-alanine: step 1/1. Catalyzes the condensation of pantoate with beta-alanine in an ATP-dependent reaction via a pantoyl-adenylate intermediate. The polypeptide is Pantothenate synthetase (Cereibacter sphaeroides (strain ATCC 17029 / ATH 2.4.9) (Rhodobacter sphaeroides)).